The chain runs to 641 residues: SH2 domain-containing protein A (641 aa).

The interval 355–384 (VNGNGTSMEWRPQNHEEDNSSTDSENTEMR) is disordered. The 95-residue stretch at 547–641 (WIEGFVTKEE…SRLGRIIRGI (95 aa)) folds into the SH2 domain.

Post-translationally, phosphorylated on tyrosine residues. Expressed in roots, leaves, stems and flowers.

The polypeptide is SH2 domain-containing protein A (Arabidopsis thaliana (Mouse-ear cress)).